The primary structure comprises 792 residues: Probable exo-1,4-beta-xylosidase xlnD (792 aa).

The first 20 residues, 1–20 (MSAIKSIATVLAAILPSVLA), serve as a signal peptide directing secretion. N23, N87, N142, and N246 each carry an N-linked (GlcNAc...) asparagine glycan. D310 is a catalytic residue. N-linked (GlcNAc...) asparagine glycosylation is found at N326, N385, N391, N404, N438, N475, N479, N516, N677, and N699.

This sequence belongs to the glycosyl hydrolase 3 family.

The protein resides in the secreted. The enzyme catalyses Hydrolysis of (1-&gt;4)-beta-D-xylans, to remove successive D-xylose residues from the non-reducing termini.. Its pathway is glycan degradation; xylan degradation. Functionally, xylan 1,4-beta-xylosidase involved in the hydrolysis of xylan, a major structural heterogeneous polysaccharide found in plant biomass representing the second most abundant polysaccharide in the biosphere, after cellulose. This Aspergillus clavatus (strain ATCC 1007 / CBS 513.65 / DSM 816 / NCTC 3887 / NRRL 1 / QM 1276 / 107) protein is Probable exo-1,4-beta-xylosidase xlnD (xlnD).